Reading from the N-terminus, the 253-residue chain is Chitooligosaccharide deacetylase (253 aa).

2 residues coordinate Mg(2+): His-61 and His-126.

Belongs to the YdjC deacetylase family. ChbG subfamily. Homodimer. Requires Mg(2+) as cofactor.

The protein resides in the cytoplasm. It carries out the reaction N,N'-diacetylchitobiose + H2O = N-acetyl-beta-D-glucosaminyl-(1-&gt;4)-D-glucosamine + acetate. The catalysed reaction is diacetylchitobiose-6'-phosphate + H2O = N'-monoacetylchitobiose-6'-phosphate + acetate. It functions in the pathway glycan degradation; chitin degradation. Its function is as follows. Involved in the degradation of chitin. ChbG is essential for growth on the acetylated chitooligosaccharides chitobiose and chitotriose but is dispensable for growth on cellobiose and chitosan dimer, the deacetylated form of chitobiose. Deacetylation of chitobiose-6-P and chitotriose-6-P is necessary for both the activation of the chb promoter by the regulatory protein ChbR and the hydrolysis of phosphorylated beta-glucosides by the phospho-beta-glucosidase ChbF. Catalyzes the removal of only one acetyl group from chitobiose-6-P to yield monoacetylchitobiose-6-P, the inducer of ChbR and the substrate of ChbF. This is Chitooligosaccharide deacetylase from Yersinia enterocolitica serotype O:8 / biotype 1B (strain NCTC 13174 / 8081).